Consider the following 95-residue polypeptide: Opiscorpine-3 (95 aa).

The N-terminal stretch at 1–19 (MNNKLTALIFLGLLAIASC) is a signal peptide. The region spanning 55 to 95 (EFMCVANVDMTKSCDTHCQKASGEKGYCHGTKCKCGVPLSY) is the BetaSPN-type CS-alpha/beta domain. 3 cysteine pairs are disulfide-bonded: cysteine 58–cysteine 82, cysteine 68–cysteine 87, and cysteine 72–cysteine 89.

This sequence belongs to the long chain scorpion toxin family. Class 3 subfamily. In terms of tissue distribution, expressed by the venom gland.

It localises to the secreted. Has antimicrobial activity against yeasts and bacteria. This chain is Opiscorpine-3, found in Opistophthalmus carinatus (African yellow leg scorpion).